A 573-amino-acid polypeptide reads, in one-letter code: Putative ATP-dependent RNA helicase R563 (573 aa).

The Helicase ATP-binding domain maps to 57–233 (INPKTPYKGL…ALTMNLLVRN (177 aa)). 70–77 (HRIGAGKT) lines the ATP pocket. The short motif at 179–182 (DEVH) is the DEAH box element. The Helicase C-terminal domain maps to 374–551 (KILRKIKRCN…AFEKALKEAA (178 aa)).

The protein belongs to the DEAD box helicase family. DEAH subfamily.

The protein localises to the virion. It catalyses the reaction ATP + H2O = ADP + phosphate + H(+). This Acanthamoeba polyphaga mimivirus (APMV) protein is Putative ATP-dependent RNA helicase R563.